A 526-amino-acid chain; its full sequence is Thymocyte selection-associated high mobility group box protein TOX (526 aa).

Disordered regions lie at residues 138–178 and 192–264; these read MPDI…PHGQ and GLNM…PQKP. Residues 192–203 show a composition bias toward polar residues; sequence GLNMGGSNVPHN. A compositionally biased stretch (low complexity) spans 209 to 220; that stretch reads GSKSATPSPSSS. Positions 228–245 are enriched in basic and acidic residues; the sequence is DTSKINGGEKRPASDMGK. A Nuclear localization signal motif is present at residues 237-256; the sequence is KRPASDMGKKPKTPKKKKKK. Residues 246–256 show a composition bias toward basic residues; that stretch reads KPKTPKKKKKK. The segment at residues 261 to 329 is a DNA-binding region (HMG box); sequence PQKPVSAYAL…EYLKQLAAYR (69 aa).

The protein belongs to the high motility group (HMG) box superfamily. Interacts with HBO1 complex composed at least of KAT7/HBO1, ING4, MEAF6, and JADE2; this complex is involved in histone acetylation. Interacts with DNMT1, LEO1, PAF1, SAP130 and SIN3A; these interactors regulate chromatin remodeling. Interacts with an array of proteins involved in RNA processing and translation and DNA replication. As to expression, expressed in NK cells. Highly expressed in tumor-infiltrating CD8-positive T cells (at protein level).

It localises to the nucleus. Transcriptional regulator with a major role in neural stem cell commitment and corticogenesis as well as in lymphoid cell development and lymphoid tissue organogenesis. Binds to GC-rich DNA sequences in the proximity of transcription start sites and may alter chromatin structure, modifying access of transcription factors to DNA. During cortical development, controls the neural stem cell pool by inhibiting the switch from proliferative to differentiating progenitors. Beyond progenitor cells, promotes neurite outgrowth in newborn neurons migrating to reach the cortical plate. May activate or repress critical genes for neural stem cell fate such as SOX2, EOMES and ROBO2. Plays an essential role in the development of lymphoid tissue-inducer (LTi) cells, a subset necessary for the formation of secondary lymphoid organs: peripheral lymph nodes and Peyer's patches. Acts as a developmental checkpoint and regulates thymocyte positive selection toward T cell lineage commitment. Required for the development of various T cell subsets, including CD4-positive helper T cells, CD8-positive cytotoxic T cells, regulatory T cells and CD1D-dependent natural killer T (NKT) cells. Required for the differentiation of common lymphoid progenitors (CMP) to innate lymphoid cells (ILC). May regulate the NOTCH-mediated gene program, promoting differentiation of the ILC lineage. Required at the progenitor phase of NK cell development in the bone marrow to specify NK cell lineage commitment. Upon chronic antigen stimulation, diverts T cell development by promoting the generation of exhaustive T cells, while suppressing effector and memory T cell programming. May regulate the expression of genes encoding inhibitory receptors such as PDCD1 and induce the exhaustion program, to prevent the overstimulation of T cells and activation-induced cell death. This chain is Thymocyte selection-associated high mobility group box protein TOX, found in Homo sapiens (Human).